The chain runs to 505 residues: Katanin p60 ATPase-containing subunit A-like 2 (505 aa).

In terms of domain architecture, LisH spans 25 to 57; that stretch reads RRKNLLILIMHYLLQEGYVDSANSLEQETKISS. Disordered stretches follow at residues 94 to 127 and 140 to 167; these read LDHDSRVQPKPRSAGKLRRAGSNSTQGLPRIGQQ and RTNGHQKALSRENSKQESGGNSPQEASE. 2 stretches are compositionally biased toward polar residues: residues 114 to 127 and 155 to 164; these read GSNSTQGLPRIGQQ and QESGGNSPQE. Residue 298 to 305 coordinates ATP; that stretch reads GPPGTGKT.

The protein belongs to the AAA ATPase family. Katanin p60 subunit A1 subfamily. A-like 2 sub-subfamily.

The protein localises to the cytoplasm. Its subcellular location is the cytoskeleton. It is found in the spindle. The protein resides in the spindle pole. The enzyme catalyses n ATP + n H2O + a microtubule = n ADP + n phosphate + (n+1) alpha/beta tubulin heterodimers.. Functionally, severs microtubules in vitro in an ATP-dependent manner. This activity may promote rapid reorganization of cellular microtubule arrays. This Xenopus laevis (African clawed frog) protein is Katanin p60 ATPase-containing subunit A-like 2 (katnal2).